A 175-amino-acid chain; its full sequence is NADH-ubiquinone oxidoreductase chain 6 (175 aa).

Helical transmembrane passes span 1-21 (MMYI…GFSS), 24-44 (SPVY…GIIM), 51-71 (LGLV…GYTI), 87-107 (VVLS…VWLF), 112-132 (ELVG…EGGF), and 148-168 (CGFW…FIAT).

This sequence belongs to the complex I subunit 6 family. As to quaternary structure, core subunit of respiratory chain NADH dehydrogenase (Complex I) which is composed of 45 different subunits.

It is found in the mitochondrion inner membrane. It catalyses the reaction a ubiquinone + NADH + 5 H(+)(in) = a ubiquinol + NAD(+) + 4 H(+)(out). Functionally, core subunit of the mitochondrial membrane respiratory chain NADH dehydrogenase (Complex I) which catalyzes electron transfer from NADH through the respiratory chain, using ubiquinone as an electron acceptor. Essential for the catalytic activity and assembly of complex I. The protein is NADH-ubiquinone oxidoreductase chain 6 (MT-ND6) of Elephas maximus (Indian elephant).